A 209-amino-acid chain; its full sequence is Large ribosomal subunit protein bL9 (209 aa).

The interval 169 to 209 (RDGASFTEDYDPNAEPGLATEAEEAVADADDNAETNSEESL) is disordered. Residues 189–209 (EAEEAVADADDNAETNSEESL) show a composition bias toward acidic residues.

Belongs to the bacterial ribosomal protein bL9 family.

Binds to the 23S rRNA. This chain is Large ribosomal subunit protein bL9, found in Zymomonas mobilis subsp. mobilis (strain ATCC 31821 / ZM4 / CP4).